Here is a 338-residue protein sequence, read N- to C-terminus: Glyceraldehyde-3-phosphate dehydrogenase, cytosolic (338 aa).

The interval 2–153 (ADKKIKIGIN…YKSDLNIVSN (152 aa)) is binding to NAD. Residues 15–16 (RI) and Asp-37 each bind NAD(+). The tract at residues 56–75 (GQWKHNELKVKDEKTLLFGE) is external loop. Arg-84 is a binding site for NAD(+). Residues 154-338 (ASCTTNCLAP…VDLIIHMSKA (185 aa)) form a catalytic region. 155–157 (SCT) is a binding site for D-glyceraldehyde 3-phosphate. Cys-156 functions as the Nucleophile in the catalytic mechanism. 2 positions are modified to S-nitrosocysteine: Cys-156 and Cys-160. The segment at 183 to 206 (HSITATQKTVDGPSMKDWRGGRAA) is S-loop. D-glyceraldehyde 3-phosphate contacts are provided by residues Thr-186, 215-216 (TG), and Arg-238. Asn-320 is a binding site for NAD(+).

This sequence belongs to the glyceraldehyde-3-phosphate dehydrogenase family. In terms of assembly, homotetramer.

It is found in the cytoplasm. The catalysed reaction is D-glyceraldehyde 3-phosphate + phosphate + NAD(+) = (2R)-3-phospho-glyceroyl phosphate + NADH + H(+). It functions in the pathway carbohydrate degradation; glycolysis; pyruvate from D-glyceraldehyde 3-phosphate: step 1/5. Key enzyme in glycolysis that catalyzes the first step of the pathway by converting D-glyceraldehyde 3-phosphate (G3P) into 3-phospho-D-glyceroyl phosphate. Essential for the maintenance of cellular ATP levels and carbohydrate metabolism. The chain is Glyceraldehyde-3-phosphate dehydrogenase, cytosolic (GAPC) from Sinapis alba (White mustard).